Here is a 285-residue protein sequence, read N- to C-terminus: Protease HtpX homolog (285 aa).

Helical transmembrane passes span 7 to 27 and 30 to 50; these read TAML…MIGG and GMTI…WFSD. His-131 contacts Zn(2+). Residue Glu-132 is part of the active site. His-135 is a Zn(2+) binding site. The next 2 membrane-spanning stretches (helical) occupy residues 141–161 and 177–197; these read ILIS…ANFA and IAGI…QMAI. Position 202 (Glu-202) interacts with Zn(2+).

The protein belongs to the peptidase M48B family. Zn(2+) serves as cofactor.

The protein resides in the cell inner membrane. The polypeptide is Protease HtpX homolog (Paraburkholderia phytofirmans (strain DSM 17436 / LMG 22146 / PsJN) (Burkholderia phytofirmans)).